Reading from the N-terminus, the 52-residue chain is Large ribosomal subunit protein eL40 (52 aa).

This sequence belongs to the eukaryotic ribosomal protein eL40 family.

This Thermococcus onnurineus (strain NA1) protein is Large ribosomal subunit protein eL40.